The primary structure comprises 439 residues: Cysteine--tRNA ligase (439 aa).

Residue cysteine 28 coordinates Zn(2+). Residues 30 to 40 (ITVYDLCHIGH) carry the 'HIGH' region motif. Zn(2+)-binding residues include cysteine 209, histidine 234, and glutamate 238. The 'KMSKS' region motif lies at 266-270 (KMSKS). Residue lysine 269 participates in ATP binding.

The protein belongs to the class-I aminoacyl-tRNA synthetase family. In terms of assembly, monomer. Requires Zn(2+) as cofactor.

The protein resides in the cytoplasm. The catalysed reaction is tRNA(Cys) + L-cysteine + ATP = L-cysteinyl-tRNA(Cys) + AMP + diphosphate. This Shigella boydii serotype 4 (strain Sb227) protein is Cysteine--tRNA ligase.